A 182-amino-acid chain; its full sequence is Bifunctional protein PyrR (182 aa).

Positions 99-111 match the PRPP-binding motif; sequence IVLVDDVLFTGRT.

This sequence belongs to the purine/pyrimidine phosphoribosyltransferase family. PyrR subfamily. In terms of assembly, homodimer and homohexamer; in equilibrium.

It catalyses the reaction UMP + diphosphate = 5-phospho-alpha-D-ribose 1-diphosphate + uracil. In terms of biological role, regulates transcriptional attenuation of the pyrimidine nucleotide (pyr) operon by binding in a uridine-dependent manner to specific sites on pyr mRNA. This disrupts an antiterminator hairpin in the RNA and favors formation of a downstream transcription terminator, leading to a reduced expression of downstream genes. Also displays a weak uracil phosphoribosyltransferase activity which is not physiologically significant. This is Bifunctional protein PyrR from Caldicellulosiruptor bescii (strain ATCC BAA-1888 / DSM 6725 / KCTC 15123 / Z-1320) (Anaerocellum thermophilum).